We begin with the raw amino-acid sequence, 161 residues long: Allophycocyanin beta chain (161 aa).

N4-methylasparagine is present on N71. A (2R,3E)-phycocyanobilin-binding site is contributed by C81.

Belongs to the phycobiliprotein family. Heterodimer of an alpha and a beta chain. Contains one covalently linked phycocyanobilin chromophore.

It is found in the plastid. Its subcellular location is the chloroplast thylakoid membrane. Its function is as follows. Light-harvesting photosynthetic bile pigment-protein from the phycobiliprotein complex. Allophycocyanin has a maximum absorption at approximately 650 nanometers. The protein is Allophycocyanin beta chain (apcB) of Porphyra purpurea (Red seaweed).